A 298-amino-acid chain; its full sequence is GTPase Era (298 aa).

One can recognise an Era-type G domain in the interval 3 to 170 (KSGFVAILGR…VQLLKDNLEE (168 aa)). The interval 11-18 (GRPNVGKS) is G1. 11 to 18 (GRPNVGKS) contacts GTP. A G2 region spans residues 37–41 (QSTRN). The tract at residues 58–61 (DTPG) is G3. Residues 58–62 (DTPGI) and 120–123 (NKID) each bind GTP. Residues 120–123 (NKID) are G4. Positions 149-151 (ISA) are G5. The KH type-2 domain occupies 201-279 (TQQEVPHSVA…YLETWVKVKK (79 aa)).

It belongs to the TRAFAC class TrmE-Era-EngA-EngB-Septin-like GTPase superfamily. Era GTPase family. Monomer.

The protein resides in the cytoplasm. It localises to the cell membrane. In terms of biological role, an essential GTPase that binds both GDP and GTP, with rapid nucleotide exchange. Plays a role in 16S rRNA processing and 30S ribosomal subunit biogenesis and possibly also in cell cycle regulation and energy metabolism. In Streptococcus equi subsp. zooepidemicus (strain H70), this protein is GTPase Era.